Consider the following 729-residue polypeptide: Fatty acid oxidation complex subunit alpha (729 aa).

Residues 1–189 (MLYKGDTLYL…KIGLVDGVVK (189 aa)) are enoyl-CoA hydratase/isomerase. Aspartate 296 lines the substrate pocket. Residues 311-729 (ETPKQAAVLG…ARPVGSLKTA (419 aa)) form a 3-hydroxyacyl-CoA dehydrogenase region. NAD(+) contacts are provided by residues methionine 324, aspartate 343, 400 to 402 (VVE), lysine 407, and serine 429. Residue histidine 450 is the For 3-hydroxyacyl-CoA dehydrogenase activity of the active site. Asparagine 453 lines the NAD(+) pocket. Substrate-binding residues include asparagine 500 and tyrosine 660. The interval 708–729 (RHNEPYYPPVEPARPVGSLKTA) is disordered.

In the N-terminal section; belongs to the enoyl-CoA hydratase/isomerase family. It in the C-terminal section; belongs to the 3-hydroxyacyl-CoA dehydrogenase family. Heterotetramer of two alpha chains (FadB) and two beta chains (FadA).

The catalysed reaction is a (3S)-3-hydroxyacyl-CoA + NAD(+) = a 3-oxoacyl-CoA + NADH + H(+). The enzyme catalyses a (3S)-3-hydroxyacyl-CoA = a (2E)-enoyl-CoA + H2O. It catalyses the reaction a 4-saturated-(3S)-3-hydroxyacyl-CoA = a (3E)-enoyl-CoA + H2O. It carries out the reaction (3S)-3-hydroxybutanoyl-CoA = (3R)-3-hydroxybutanoyl-CoA. The catalysed reaction is a (3Z)-enoyl-CoA = a 4-saturated (2E)-enoyl-CoA. The enzyme catalyses a (3E)-enoyl-CoA = a 4-saturated (2E)-enoyl-CoA. The protein operates within lipid metabolism; fatty acid beta-oxidation. Functionally, involved in the aerobic and anaerobic degradation of long-chain fatty acids via beta-oxidation cycle. Catalyzes the formation of 3-oxoacyl-CoA from enoyl-CoA via L-3-hydroxyacyl-CoA. It can also use D-3-hydroxyacyl-CoA and cis-3-enoyl-CoA as substrate. This Salmonella typhimurium (strain LT2 / SGSC1412 / ATCC 700720) protein is Fatty acid oxidation complex subunit alpha.